The following is a 114-amino-acid chain: MQDIIRQIEAEQLRKDIPDFKPGDTVKVHVKVVEGNRERIQLFEGIVIKRRGGGLSETFTVRRVSYGVAVERTFLVHSPRLDKIEVVRRGRVRRAKLYYLRDLSGKAARIRDKR.

The protein belongs to the bacterial ribosomal protein bL19 family.

Its function is as follows. This protein is located at the 30S-50S ribosomal subunit interface and may play a role in the structure and function of the aminoacyl-tRNA binding site. This chain is Large ribosomal subunit protein bL19, found in Heliobacterium modesticaldum (strain ATCC 51547 / Ice1).